The primary structure comprises 200 residues: Crossover junction endodeoxyribonuclease RuvC (200 aa).

Residues aspartate 18, glutamate 78, and aspartate 151 contribute to the active site. The Mg(2+) site is built by aspartate 18, glutamate 78, and aspartate 151.

This sequence belongs to the RuvC family. As to quaternary structure, homodimer which binds Holliday junction (HJ) DNA. The HJ becomes 2-fold symmetrical on binding to RuvC with unstacked arms; it has a different conformation from HJ DNA in complex with RuvA. In the full resolvosome a probable DNA-RuvA(4)-RuvB(12)-RuvC(2) complex forms which resolves the HJ. Requires Mg(2+) as cofactor.

The protein resides in the cytoplasm. The catalysed reaction is Endonucleolytic cleavage at a junction such as a reciprocal single-stranded crossover between two homologous DNA duplexes (Holliday junction).. Its function is as follows. The RuvA-RuvB-RuvC complex processes Holliday junction (HJ) DNA during genetic recombination and DNA repair. Endonuclease that resolves HJ intermediates. Cleaves cruciform DNA by making single-stranded nicks across the HJ at symmetrical positions within the homologous arms, yielding a 5'-phosphate and a 3'-hydroxyl group; requires a central core of homology in the junction. The consensus cleavage sequence is 5'-(A/T)TT(C/G)-3'. Cleavage occurs on the 3'-side of the TT dinucleotide at the point of strand exchange. HJ branch migration catalyzed by RuvA-RuvB allows RuvC to scan DNA until it finds its consensus sequence, where it cleaves and resolves the cruciform DNA. The protein is Crossover junction endodeoxyribonuclease RuvC of Cytophaga hutchinsonii (strain ATCC 33406 / DSM 1761 / CIP 103989 / NBRC 15051 / NCIMB 9469 / D465).